We begin with the raw amino-acid sequence, 328 residues long: Delta(3,5)-Delta(2,4)-dienoyl-CoA isomerase, mitochondrial (328 aa).

A mitochondrion-targeting transit peptide spans 1-26 (MAAGIVASRRLRDLLTRRLTASNYPG). Residues 116–120 (AGVDL) and G174 contribute to the substrate site. K231 bears the N6-succinyllysine mark. Position 268 is a phosphoserine (S268). Positions 326–328 (SKL) match the Microbody targeting signal motif. N6-acetyllysine is present on K327.

The protein belongs to the enoyl-CoA hydratase/isomerase family. As to quaternary structure, homohexamer.

It is found in the mitochondrion. The protein resides in the peroxisome. It carries out the reaction (3E,5Z)-octadienoyl-CoA = (2E,4E)-octadienoyl-CoA. It catalyses the reaction (3E,5Z,8Z,11Z,14Z)-eicosapentaenoyl-CoA = (2E,4E,8Z,11Z,14Z)-eicosapentaenoyl-CoA. It functions in the pathway lipid metabolism; fatty acid beta-oxidation. In terms of biological role, isomerization of 3-trans,5-cis-dienoyl-CoA to 2-trans,4-trans-dienoyl-CoA. The chain is Delta(3,5)-Delta(2,4)-dienoyl-CoA isomerase, mitochondrial (ECH1) from Pongo abelii (Sumatran orangutan).